A 199-amino-acid polypeptide reads, in one-letter code: Recombination protein RecR (199 aa).

Residues 56–71 (CSICFNVSQDDQCRIC) form a C4-type zinc finger. Positions 79 to 174 (SVLCVVEEYK…RVTRLASGLP (96 aa)) constitute a Toprim domain.

The protein belongs to the RecR family.

Functionally, may play a role in DNA repair. It seems to be involved in an RecBC-independent recombinational process of DNA repair. It may act with RecF and RecO. The sequence is that of Recombination protein RecR from Nocardioides sp. (strain ATCC BAA-499 / JS614).